Here is a 356-residue protein sequence, read N- to C-terminus: MQPIPDVNQRIARISAHLHPPKSQMEESSALRRANCRAKGGAPGFKVAILGAAGGIGQPLAMLMKMNPLVSVLHLYDVVNAPGVTADISHMDTGAVVRGFLGQQQLEAALTGMDLIIVPAGVPRKPGMTRDDLFKINAGIVKTLCEGIAKCCPRAIVNLISNPVNSTVPIAAEVFKKAGTYDPKRLLGVTMLDVVRANTFVAEVLGLDPRDVDVPVVGGHAGVTILPLLSQVKPPSSFTQEEISYLTDRIQNGGTEVVEAKAGAGSATLSMAYAAVKFADACLRGLRGDAGVIECAFVSSQVTELPFFASKVRLGRNGIEEVYSLGPLNEYERIGLEKAKKELAGSIEKGVSFIRS.

The transit peptide at 1–36 (MQPIPDVNQRIARISAHLHPPKSQMEESSALRRANC) directs the protein to the glyoxysome. Residues 51–57 (GAAGGIG) and aspartate 77 contribute to the NAD(+) site. 2 residues coordinate substrate: arginine 124 and arginine 130. Residues asparagine 137 and 160–162 (ISN) contribute to the NAD(+) site. Residues asparagine 162 and arginine 196 each contribute to the substrate site. Histidine 220 acts as the Proton acceptor in catalysis. Methionine 271 provides a ligand contact to NAD(+).

The protein belongs to the LDH/MDH superfamily. MDH type 1 family. Homodimer.

Its subcellular location is the glyoxysome. It catalyses the reaction (S)-malate + NAD(+) = oxaloacetate + NADH + H(+). The sequence is that of Malate dehydrogenase, glyoxysomal from Citrullus lanatus (Watermelon).